Reading from the N-terminus, the 443-residue chain is Chromosome partition protein MukF (443 aa).

The tract at residues 209-237 (LDETSGNLRELQDTLNAAGDKLQAQLLRI) is leucine-zipper.

Belongs to the MukF family. As to quaternary structure, interacts, and probably forms a ternary complex, with MukE and MukB via its C-terminal region. The complex formation is stimulated by calcium or magnesium. It is required for an interaction between MukE and MukB.

Its subcellular location is the cytoplasm. The protein resides in the nucleoid. Functionally, involved in chromosome condensation, segregation and cell cycle progression. May participate in facilitating chromosome segregation by condensation DNA from both sides of a centrally located replisome during cell division. Not required for mini-F plasmid partitioning. Probably acts via its interaction with MukB and MukE. Overexpression results in anucleate cells. It has a calcium binding activity. The protein is Chromosome partition protein MukF of Actinobacillus pleuropneumoniae serotype 3 (strain JL03).